The primary structure comprises 594 residues: Probable ABC transporter-binding protein DR_1571 (594 aa).

An N-terminal signal peptide occupies residues 1 to 18 (MKKVMMLALALGASTSLA).

This sequence belongs to the bacterial solute-binding protein 5 family.

In terms of biological role, probably part of a binding-protein-dependent transport system. This is Probable ABC transporter-binding protein DR_1571 from Deinococcus radiodurans (strain ATCC 13939 / DSM 20539 / JCM 16871 / CCUG 27074 / LMG 4051 / NBRC 15346 / NCIMB 9279 / VKM B-1422 / R1).